Reading from the N-terminus, the 88-residue chain is Small ribosomal subunit protein uS15 (88 aa).

The protein belongs to the universal ribosomal protein uS15 family. As to quaternary structure, part of the 30S ribosomal subunit. Forms a bridge to the 50S subunit in the 70S ribosome, contacting the 23S rRNA.

One of the primary rRNA binding proteins, it binds directly to 16S rRNA where it helps nucleate assembly of the platform of the 30S subunit by binding and bridging several RNA helices of the 16S rRNA. In terms of biological role, forms an intersubunit bridge (bridge B4) with the 23S rRNA of the 50S subunit in the ribosome. This is Small ribosomal subunit protein uS15 from Metamycoplasma arthritidis (strain 158L3-1) (Mycoplasma arthritidis).